Consider the following 117-residue polypeptide: Large ribosomal subunit protein bL20 (117 aa).

It belongs to the bacterial ribosomal protein bL20 family.

Binds directly to 23S ribosomal RNA and is necessary for the in vitro assembly process of the 50S ribosomal subunit. It is not involved in the protein synthesizing functions of that subunit. This is Large ribosomal subunit protein bL20 from Histophilus somni (strain 129Pt) (Haemophilus somnus).